A 265-amino-acid chain; its full sequence is MDNLTKVREYLKSYSRLDQAVGEIDEIEAQRDEKSNYELFQEDGVEEHTKPSYFQAADDSDTESEPEIEDNQGLYVPDPEAEQVEGFIQGPLDDYADEEVDVVFTSDWKQPELKSDEHGKTLRLTLPEGLSGEQKSQWLSTIKAVVQSAKYWNLAECTFEASREGVIMEERQMTPDVYKVTPVMNTHPSQSEAVSDVWSLSKTSMTFQPKKASLQPLTISLDELFSSRGEFISVGGNGRMSHKEAILLGLRYKKLYNQARVKYSL.

An interaction with N(0) region spans residues 1 to 60 (MDNLTKVREYLKSYSRLDQAVGEIDEIEAQRDEKSNYELFQEDGVEEHTKPSYFQAADDS). Y14 carries the post-translational modification Phosphotyrosine; by host. The segment at 42-72 (EDGVEEHTKPSYFQAADDSDTESEPEIEDNQ) is disordered. The segment at 49 to 105 (TKPSYFQAADDSDTESEPEIEDNQGLYVPDPEAEQVEGFIQGPLDDYADEEVDVVFT) is interaction with the L polymerase. Positions 58–70 (DDSDTESEPEIED) are enriched in acidic residues. Position 60 is a phosphoserine; by host CK2 (S60). T62 is subject to Phosphothreonine; by host CK2. At S64 the chain carries Phosphoserine; by host CK2. Residues 109 to 170 (KQPELKSDEH…ASREGVIMEE (62 aa)) are oligomerization. The segment at 171-193 (RQMTPDVYKVTPVMNTHPSQSEA) is hinge. A phosphoserine; by host mark is found at S226 and S227. S233 carries the phosphoserine modification. Residues 245–265 (AILLGLRYKKLYNQARVKYSL) form an interaction with the Nucleoprotein-RNA and template-binding region.

It belongs to the vesiculovirus protein P family. Homodimer. Interacts with the L polymerase; the association of P and L forms the polymerase complex and positions P optimally for encapsidation of newly synthesized genomes with the nucleoprotein. Interacts (via N-terminus) with N(0). Interacts (via C-terminus) with N in ribonucleocapsid (via C-terminus); this interaction allows to package the L polymerase in the virion and positions the polymerase on the template, since P acts as a bridge between N and L. Phosphorylated in the N-terminus by host CK2. Phosphorylation of the phosphoprotein is required for the transcriptional function of the P-L complex.

The protein resides in the virion. Its subcellular location is the host cytoplasm. In terms of biological role, nonenzymatic cofactor regulating the function and conformation of the RNA polymerase and part of the transcription and replication complex. Binds the viral ribonucleocapsid and positions the L polymerase on the template. Acts as a chaperone for newly synthesized free N protein, so-called N(0). Plays a role in virion assembly. The sequence is that of Phosphoprotein (P) from Vesicular stomatitis Indiana virus (strain 98COE North America) (VSIV).